The sequence spans 47 residues: PhoP/PhoQ regulator MgrB (47 aa).

The chain crosses the membrane as a helical span at residues 6-26; sequence WVVLGIVVVVCLLLWAQVFNI.

The protein belongs to the MgrB family. May form homooligomers. Probably interacts with the periplasmic domain of PhoQ.

It localises to the cell inner membrane. In terms of biological role, phoP-regulated transcription is redox-sensitive, being activated when the periplasm becomes more reducing. MgrB acts between DsbA/DsbB and PhoP/PhoQ in this pathway. Represses PhoP/PhoQ signaling, possibly by binding to the periplasmic domain of PhoQ, altering its activity and that of downstream effector PhoP. In Salmonella gallinarum (strain 287/91 / NCTC 13346), this protein is PhoP/PhoQ regulator MgrB.